A 455-amino-acid chain; its full sequence is Ectonucleoside triphosphate diphosphohydrolase 6 (455 aa).

At 1–12 the chain is on the cytoplasmic side; that stretch reads MRKIPNHGTLRM. The chain crosses the membrane as a helical; Signal-anchor for type II membrane protein span at residues 13–32; sequence TKVAYPLGLCVGLFIYVAYI. Over 33 to 455 the chain is Lumenal; the sequence is KWHRASAAQA…SLKRQKVPAL (423 aa). Residue N192 is glycosylated (N-linked (GlcNAc...) asparagine). Residue E196 is the Proton acceptor of the active site. Residue N256 is glycosylated (N-linked (GlcNAc...) asparagine). 2 cysteine pairs are disulfide-bonded: C297/C327 and C387/C401.

The protein belongs to the GDA1/CD39 NTPase family. Ca(2+) serves as cofactor. Requires Mg(2+) as cofactor. Post-translationally, might be cleaved at the N-terminus, retained in an intracellular membrane compartment and in addition be released into the extracellular medium. In terms of processing, N-glycosylated. As to expression, expressed in heart and brain.

It localises to the golgi apparatus membrane. The protein resides in the secreted. It is found in the cell membrane. The enzyme catalyses a ribonucleoside 5'-diphosphate + H2O = a ribonucleoside 5'-phosphate + phosphate + H(+). It catalyses the reaction IDP + H2O = IMP + phosphate + H(+). The catalysed reaction is GDP + H2O = GMP + phosphate + H(+). It carries out the reaction UDP + H2O = UMP + phosphate + H(+). Its function is as follows. Catalyzes the hydrolysis of nucleoside triphosphates and diphosphates in a calcium- or magnesium-dependent manner. Has a strong preference for nucleoside diphosphates, preferentially hydrolyzes GDP, IDP, and UDP, with slower hydrolysis of CDP, ITP, GTP, CTP, ADP, and UTP and virtually no hydrolysis of ATP. The membrane bound form might support glycosylation reactions in the Golgi apparatus and, when released from cells, might catalyze the hydrolysis of extracellular nucleotides. The sequence is that of Ectonucleoside triphosphate diphosphohydrolase 6 (Entpd6) from Rattus norvegicus (Rat).